A 325-amino-acid chain; its full sequence is tRNA uridine(34) hydroxylase (325 aa).

The 97-residue stretch at 122 to 218 (EENRCLVLDV…YGQAMGTGKW (97 aa)) folds into the Rhodanese domain. Cys178 acts as the Cysteine persulfide intermediate in catalysis.

Belongs to the TrhO family.

The enzyme catalyses uridine(34) in tRNA + AH2 + O2 = 5-hydroxyuridine(34) in tRNA + A + H2O. In terms of biological role, catalyzes oxygen-dependent 5-hydroxyuridine (ho5U) modification at position 34 in tRNAs. The chain is tRNA uridine(34) hydroxylase from Chlamydia felis (strain Fe/C-56) (Chlamydophila felis).